The sequence spans 159 residues: Disease resistance response protein Pi176 (159 aa).

Belongs to the BetVI family.

The protein is Disease resistance response protein Pi176 of Pisum sativum (Garden pea).